A 150-amino-acid chain; its full sequence is MLLDDLYEIVEPITADLGYILWGIEVVGSGKLTIRIFIDHENGVSVDDCQIVSKEISAVFDVEDPVSGKYILEVSSPGMNRQIFNIIQAQALVGFNVKAVTLAPVGSQTKFKGVLERVEGNSVILNLEDGKEISFDFDELKKLRVSPDFS.

It belongs to the RimP family.

Its subcellular location is the cytoplasm. Required for maturation of 30S ribosomal subunits. The sequence is that of Ribosome maturation factor RimP from Francisella tularensis subsp. mediasiatica (strain FSC147).